We begin with the raw amino-acid sequence, 437 residues long: MFTAFARAFKTPDLRKKLLFTLGIIVIYRLGAHIPAPGVDYSKVQQCIDQADSGGLLGLMQMFSGGALLQITIFALGIMPYITASIILQLLTVVIPRLEALKKEGQSGTAKITQYTRYLTVALAILQGTGLVATARSGALFQNCSVGSQIVADKSIFTTIIMVLTMTAGTPPVMWLGELITDRGIGNGMSIPMFISIAATFPGALWAIKESGKLADGWIEFGTVILIGFVMVALVVFVEQAQRRIPVQLPKRMIGRRSYGGTSTYIPLKVNQAGVIPVIFASSLLYIPALIVQFSNSQAGWATWIQDNFVTGDHPYYIATYFVLIVFFAFFYVAISFNPDEVADNMKKYGGFIPGIRAGRPTAEYLSYVLNRITWPGSLYLGLIALVPTMALAGFGGANQNFPFGGTSILIIVGVGLETVKQIESQLQQRNYEGFLR.

Transmembrane regions (helical) follow at residues 19–39 (LFTL…APGV), 68–88 (LLQI…SIIL), 121–141 (VALA…GALF), 156–176 (IFTT…VMWL), 188–208 (GMSI…LWAI), 218–238 (WIEF…VVFV), 274–294 (GVIP…IVQF), 317–337 (YIAT…AISF), 378–398 (SLYL…FGGA), and 400–420 (QNFP…LETV).

It belongs to the SecY/SEC61-alpha family. As to quaternary structure, component of the Sec protein translocase complex. Heterotrimer consisting of SecY, SecE and SecG subunits. The heterotrimers can form oligomers, although 1 heterotrimer is thought to be able to translocate proteins. Interacts with the ribosome. Interacts with SecDF, and other proteins may be involved. Interacts with SecA.

Its subcellular location is the cell membrane. In terms of biological role, the central subunit of the protein translocation channel SecYEG. Consists of two halves formed by TMs 1-5 and 6-10. These two domains form a lateral gate at the front which open onto the bilayer between TMs 2 and 7, and are clamped together by SecE at the back. The channel is closed by both a pore ring composed of hydrophobic SecY resides and a short helix (helix 2A) on the extracellular side of the membrane which forms a plug. The plug probably moves laterally to allow the channel to open. The ring and the pore may move independently. The sequence is that of Protein translocase subunit SecY from Streptomyces griseus.